Consider the following 118-residue polypeptide: Non-specific lipid-transfer protein 1 (118 aa).

The N-terminal stretch at 1 to 25 (MASLRVSCLVALMCMVVISAPMAEA) is a signal peptide. 4 disulfide bridges follow: C29–C76, C39–C53, C54–C99, and C74–C113.

The protein belongs to the plant LTP family.

In terms of biological role, plant non-specific lipid-transfer proteins transfer phospholipids as well as galactolipids across membranes. May play a role in wax or cutin deposition in the cell walls of expanding epidermal cells and certain secretory tissues. This is Non-specific lipid-transfer protein 1 from Lens culinaris (Lentil).